Here is a 206-residue protein sequence, read N- to C-terminus: Large ribosomal subunit protein uL4 (206 aa).

A disordered region spans residues 63–97 (MYKQKGTGRARHHSARAPQFRGGGKAHGPVVRSHE). Residues 64–77 (YKQKGTGRARHHSA) are compositionally biased toward basic residues.

The protein belongs to the universal ribosomal protein uL4 family. In terms of assembly, part of the 50S ribosomal subunit.

In terms of biological role, one of the primary rRNA binding proteins, this protein initially binds near the 5'-end of the 23S rRNA. It is important during the early stages of 50S assembly. It makes multiple contacts with different domains of the 23S rRNA in the assembled 50S subunit and ribosome. Its function is as follows. Forms part of the polypeptide exit tunnel. The chain is Large ribosomal subunit protein uL4 from Rhizobium johnstonii (strain DSM 114642 / LMG 32736 / 3841) (Rhizobium leguminosarum bv. viciae).